The following is a 284-amino-acid chain: Steroidogenic acute regulatory protein, mitochondrial (284 aa).

The transit peptide at 1 to 62 (MFLATFKLCA…RRSSLLGSQL (62 aa)) directs the protein to the mitochondrion. 2 positions are modified to phosphoserine; by PKA: Ser-56 and Ser-194. One can recognise an START domain in the interval 66–279 (LYSDQELSYI…LRKRLEASPA (214 aa)).

In terms of assembly, may interact with TSPO. Expressed within glia and neurons in discrete regions of the brain.

It localises to the mitochondrion. The catalysed reaction is cholesterol(in) = cholesterol(out). It participates in steroid metabolism; cholesterol metabolism. Functionally, plays a key role in steroid hormone synthesis by enhancing the metabolism of cholesterol into pregnenolone. Transporter that binds to and transport cholesterol through the intermembrane space of the mitochondrion. In Mus musculus (Mouse), this protein is Steroidogenic acute regulatory protein, mitochondrial (Star).